The sequence spans 209 residues: Large ribosomal subunit protein uL3 (209 aa).

The segment at 129-153 is disordered; sequence SRGPMSHGSKFHRAPGSMGAASDPS.

This sequence belongs to the universal ribosomal protein uL3 family. As to quaternary structure, part of the 50S ribosomal subunit. Forms a cluster with proteins L14 and L19.

In terms of biological role, one of the primary rRNA binding proteins, it binds directly near the 3'-end of the 23S rRNA, where it nucleates assembly of the 50S subunit. The protein is Large ribosomal subunit protein uL3 of Clostridium perfringens (strain 13 / Type A).